A 230-amino-acid polypeptide reads, in one-letter code: Ureidoacrylate amidohydrolase RutB (230 aa).

Aspartate 24 functions as the Proton acceptor in the catalytic mechanism. The active site involves lysine 133. Cysteine 166 serves as the catalytic Nucleophile.

This sequence belongs to the isochorismatase family. RutB subfamily.

The catalysed reaction is (Z)-3-ureidoacrylate + H2O + H(+) = (Z)-3-aminoacrylate + NH4(+) + CO2. It carries out the reaction (Z)-3-ureidoacrylate + H2O = (Z)-3-aminoacrylate + carbamate + H(+). The enzyme catalyses (Z)-2-methylureidoacrylate + H2O + H(+) = (Z)-2-methylaminoacrylate + NH4(+) + CO2. Its function is as follows. Hydrolyzes ureidoacrylate to form aminoacrylate and carbamate. The carbamate hydrolyzes spontaneously, thereby releasing one of the nitrogen atoms of the pyrimidine ring as ammonia and one of its carbon atoms as CO2. This chain is Ureidoacrylate amidohydrolase RutB, found in Escherichia coli O157:H7.